We begin with the raw amino-acid sequence, 113 residues long: 2Fe-2S ferredoxin (113 aa).

The 2Fe-2S ferredoxin-type domain occupies 2–104; that stretch reads PKVIFLPNED…DLVVEIPKYN (103 aa). [2Fe-2S] cluster is bound by residues C42, C48, C51, and C87.

It belongs to the adrenodoxin/putidaredoxin family. The cofactor is [2Fe-2S] cluster.

Functionally, ferredoxin are iron-sulfur proteins that transfer electrons in a wide variety of metabolic reactions. The sequence is that of 2Fe-2S ferredoxin (fdx) from Haemophilus influenzae (strain ATCC 51907 / DSM 11121 / KW20 / Rd).